A 249-amino-acid polypeptide reads, in one-letter code: tRNA pseudouridine synthase A (249 aa).

Aspartate 54 functions as the Nucleophile in the catalytic mechanism. Tyrosine 111 serves as a coordination point for substrate.

This sequence belongs to the tRNA pseudouridine synthase TruA family. In terms of assembly, homodimer.

It catalyses the reaction uridine(38/39/40) in tRNA = pseudouridine(38/39/40) in tRNA. Functionally, formation of pseudouridine at positions 38, 39 and 40 in the anticodon stem and loop of transfer RNAs. The protein is tRNA pseudouridine synthase A of Mycoplasma capricolum subsp. capricolum (strain California kid / ATCC 27343 / NCTC 10154).